The primary structure comprises 412 residues: Pentatricopeptide repeat-containing protein At3g60980, mitochondrial (412 aa).

The N-terminal 18 residues, 1–18, are a transit peptide targeting the mitochondrion; that stretch reads MSLIGRLNLGRRFCTAVP. PPR repeat units follow at residues 69 to 104, 105 to 139, 143 to 178, 179 to 213, 230 to 264, 266 to 296, 305 to 339, 344 to 371, and 373 to 407; these read TTTI…NLRP, NSHC…GQVH, SDDS…TTYP, DHVA…FLIA, VAFL…NRLL, CAET…LLDK, DSDT…NDYL, IITR…DFGY, and DVNT…TLKE.

It belongs to the PPR family. P subfamily.

The protein resides in the mitochondrion. The sequence is that of Pentatricopeptide repeat-containing protein At3g60980, mitochondrial from Arabidopsis thaliana (Mouse-ear cress).